The primary structure comprises 88 residues: Small ribosomal subunit protein bS20 (88 aa).

It belongs to the bacterial ribosomal protein bS20 family.

Its function is as follows. Binds directly to 16S ribosomal RNA. In Aromatoleum aromaticum (strain DSM 19018 / LMG 30748 / EbN1) (Azoarcus sp. (strain EbN1)), this protein is Small ribosomal subunit protein bS20.